The chain runs to 200 residues: Proteasome subunit beta 2 (200 aa).

A propeptide spans 1–7 (METKKTG) (removed in mature form; by autocatalysis). Catalysis depends on Thr-8, which acts as the Nucleophile.

It belongs to the peptidase T1B family. In terms of assembly, the 20S proteasome core is composed of 14 alpha and 14 beta subunits that assemble into four stacked heptameric rings, resulting in a barrel-shaped structure. The two inner rings, each composed of seven catalytic beta subunits, are sandwiched by two outer rings, each composed of seven alpha subunits. The catalytic chamber with the active sites is on the inside of the barrel. Has a gated structure, the ends of the cylinder being occluded by the N-termini of the alpha-subunits. Is capped at one or both ends by the proteasome regulatory ATPase, PAN.

It localises to the cytoplasm. The catalysed reaction is Cleavage of peptide bonds with very broad specificity.. The formation of the proteasomal ATPase PAN-20S proteasome complex, via the docking of the C-termini of PAN into the intersubunit pockets in the alpha-rings, triggers opening of the gate for substrate entry. Interconversion between the open-gate and close-gate conformations leads to a dynamic regulation of the 20S proteasome proteolysis activity. Component of the proteasome core, a large protease complex with broad specificity involved in protein degradation. The sequence is that of Proteasome subunit beta 2 from Thermococcus onnurineus (strain NA1).